We begin with the raw amino-acid sequence, 147 residues long: Globin (147 aa).

An N-acetylserine modification is found at S2. One can recognise a Globin domain in the interval 2-147 (SLSAAEADLA…IIDALKAAGK (146 aa)). H96 contributes to the heme b binding site.

It belongs to the globin family. In terms of assembly, monomer.

The protein is Globin of Aplysia limacina (Sea hare).